The following is a 95-amino-acid chain: Large ribosomal subunit protein uL23 (95 aa).

This sequence belongs to the universal ribosomal protein uL23 family. As to quaternary structure, part of the 50S ribosomal subunit. Contacts protein L29, and trigger factor when it is bound to the ribosome.

In terms of biological role, one of the early assembly proteins it binds 23S rRNA. One of the proteins that surrounds the polypeptide exit tunnel on the outside of the ribosome. Forms the main docking site for trigger factor binding to the ribosome. The chain is Large ribosomal subunit protein uL23 from Anoxybacillus flavithermus (strain DSM 21510 / WK1).